The chain runs to 1135 residues: Integrin alpha-7 (1135 aa).

The N-terminal stretch at 1–33 (MARIPRCDFLGLPGICYLLSFLLAGLLLPRASA) is a signal peptide. At 34–1036 (FNLDVMGAIR…VAVVAEGVPW (1003 aa)) the chain is on the extracellular side. FG-GAP repeat units follow at residues 38–103 (VMGA…ETDC), 110–165 (RGAN…RCFV), 185–238 (EGRP…DPDQ), 248–305 (DRLT…ASRL), 306–367 (IPEV…HWAD), 368–423 (ISPL…GVVT), and 427–486 (QVLE…IDPR). N-linked (GlcNAc...) asparagine glycosylation occurs at Asn86. Cystine bridges form between Cys94/Cys103, Cys140/Cys163, and Cys184/Cys197. The Ca(2+) site is built by Asp328, Asn330, Asp332, Asp336, Asp390, Asn392, Asp394, Asp398, Asp448, Asp450, Asn452, Tyr454, and Asp456. Disulfide bonds link Cys495-Cys502, Cys508-Cys571, Cys637-Cys643, Cys736-Cys747, Cys894-Cys948, and Cys955-Cys960. An N-linked (GlcNAc...) asparagine glycan is attached at Asn741. Basic and acidic residues predominate over residues 905-916 (VDSRDRRRRELG). The segment at 905 to 933 (VDSRDRRRRELGQPEPQEPPEKVEPSTSW) is disordered. Residue Asn943 is glycosylated (N-linked (GlcNAc...) asparagine). N-linked (GlcNAc...) asparagine glycans are attached at residues Asn979 and Asn999. A helical membrane pass occupies residues 1037 to 1057 (WVILLAVLAGLLVLALLVLLL). At 1058 to 1135 (WKLGFFKRAK…PDGHPVSVTA (78 aa)) the chain is on the cytoplasmic side. The GFFKR motif signature appears at 1061-1065 (GFFKR). 3 consecutive repeat copies span residues 1111–1114 (DAHP), 1119–1122 (DWHP), and 1127–1130 (DGHP). Residues 1111 to 1130 (DAHPILAADWHPELGPDGHP) form a 3 X 4 AA repeats of D-X-H-P region.

It belongs to the integrin alpha chain family. As to quaternary structure, interacts (via C-terminus intracellular tail region) with CIB1; the interaction is stabilized/increased in a calcium- and magnesium-dependent manner. Heterodimer of an alpha and a beta subunit. The alpha subunit is composed of a heavy and a light chain linked by a disulfide bond. Alpha-7 associates with beta-1. Interacts with COMP. Post-translationally, ADP-ribosylated on at least two sites of the extracellular domain in skeletal myotubes. A 70 kDa form is created by proteolytic cleavage. Cleavage is elevated during myogenic differentiation and the cleaved form enhances cell adhesion and spreading on laminin. As to expression, expressed in skeletal and cardiac muscle. Expressed in replicating myoblasts. In differentiated muscle fibers localizes between fibers and the surrounding matrix. Isoform Alpha-7X1A and isoform Alpha-7X1B are expressed at myotendinous and neuromuscular junctions; isoform Alpha-7X1C is expressed at neuromuscular junctions and at extrasynaptic sites.

It localises to the membrane. Functionally, integrin alpha-7/beta-1 is the primary laminin receptor on skeletal myoblasts and adult myofibers. During myogenic differentiation, it may induce changes in the shape and mobility of myoblasts, and facilitate their localization at laminin-rich sites of secondary fiber formation. Involved in the maintenance of the myofibers cytoarchitecture as well as for their anchorage, viability and functional integrity. Required to promote contractile phenotype acquisition in differentiated airway smooth muscle (ASM) cells. Acts as a Schwann cell receptor for laminin-2. Acts as a receptor of COMP and mediates its effect on vascular smooth muscle cells (VSMCs) maturation. In Rattus norvegicus (Rat), this protein is Integrin alpha-7 (Itga7).